A 125-amino-acid chain; its full sequence is Photosystem II extrinsic protein U (125 aa).

An N-terminal signal peptide occupies residues 1-29 (MKRLLSWLTGLVVIAGLLIGLLVPPSVSA).

This sequence belongs to the PsbU family. As to quaternary structure, PSII is composed of 1 copy each of membrane proteins PsbA, PsbB, PsbC, PsbD, PsbE, PsbF, PsbH, PsbI, PsbJ, PsbK, PsbL, PsbM, PsbT, PsbX, PsbY, PsbZ, Psb30/Ycf12, peripheral proteins PsbO, CyanoQ (PsbQ), PsbU, PsbV and a large number of cofactors. It forms dimeric complexes.

The protein localises to the cellular thylakoid membrane. One of the extrinsic, lumenal subunits of photosystem II (PSII). PSII is a light-driven water plastoquinone oxidoreductase, using light energy to abstract electrons from H(2)O, generating a proton gradient subsequently used for ATP formation. The extrinsic proteins stabilize the structure of photosystem II oxygen-evolving complex (OEC), the ion environment of oxygen evolution and protect the OEC against heat-induced inactivation. This Synechococcus sp. (strain CC9311) protein is Photosystem II extrinsic protein U.